An 883-amino-acid chain; its full sequence is NF-X1-type zinc finger protein NFXL2 (883 aa).

Positions Met1 to Thr10 are enriched in polar residues. The segment at Met1–Arg44 is disordered. The segment at Cys87–Arg152 adopts an RING-type; degenerate zinc-finger fold. 11 consecutive NF-X1-type zinc fingers follow at residues Cys198–Lys216, Cys250–Glu269, Cys303–Tyr322, Cys357–Ile377, Cys410–Glu429, Cys437–Ile456, Cys494–Leu515, Cys523–Glu568, Cys605–Leu636, Cys646–Thr664, and Cys709–Cys738. A disordered region spans residues Glu798 to Gln824. The helical transmembrane segment at Met841–Leu863 threads the bilayer.

The protein belongs to the NFX1 family. As to quaternary structure, interacts with ADO1/ZTL. Constitutively expressed in mesophyll and guard cells.

It is found in the nucleus. The protein resides in the membrane. Its pathway is protein modification; protein ubiquitination. In terms of biological role, probable transcriptional regulator. May mediate E2- or E3-dependent ubiquitination. Required to gate light sensitivity during the night. Regulates the speed of the clock by acting in the feedback loop between CCA1, LHY and APRR1/TOC1. Promotes the expression of CCA1 at night but not by days. This activational effect is enhanced by interaction with ADO1/ZTL. Association with ADO1/ZTL is not leading to the degradation of NFXL2. Confers sensitivity to osmotic stress such as high salinity. Prevents H(2)O(2) production and abscisic acid accumulation. Part of a regulatory network that integrates the biosynthesis and action of abscisic acid, reactive oxygen species and cuticle components. The protein is NF-X1-type zinc finger protein NFXL2 (NFXL2) of Arabidopsis thaliana (Mouse-ear cress).